A 229-amino-acid chain; its full sequence is Ribonuclease 3 (229 aa).

The RNase III domain occupies 5–127 (LSRLERQLGY…LIGAIYLDAG (123 aa)). Glutamate 40 is a binding site for Mg(2+). Residue aspartate 44 is part of the active site. Mg(2+)-binding residues include aspartate 113 and glutamate 116. Glutamate 116 is an active-site residue. Positions 154–224 (DPKTRLQEFL…AAAALIALGV (71 aa)) constitute a DRBM domain.

The protein belongs to the ribonuclease III family. Homodimer. Mg(2+) serves as cofactor.

The protein localises to the cytoplasm. The enzyme catalyses Endonucleolytic cleavage to 5'-phosphomonoester.. In terms of biological role, digests double-stranded RNA. Involved in the processing of primary rRNA transcript to yield the immediate precursors to the large and small rRNAs (23S and 16S). Processes some mRNAs, and tRNAs when they are encoded in the rRNA operon. Processes pre-crRNA and tracrRNA of type II CRISPR loci if present in the organism. The polypeptide is Ribonuclease 3 (Pseudomonas fluorescens (strain Pf0-1)).